The sequence spans 156 residues: Endogenous retrovirus group K member 9 Pro protein (156 aa).

The 76-residue stretch at 21–96 (FEGLVDTGAD…IPLNLWGRDL (76 aa)) folds into the Peptidase A2 domain. Asp26 is a catalytic residue. In terms of domain architecture, G-patch spans 111 to 156 (YSPTSQKIMTKRGYIPGKGLGKNEDGIKIPFEAKINQKREGIGYPF).

Belongs to the peptidase A2 family. HERV class-II K(HML-2) subfamily. As to quaternary structure, active as a homodimer. Autoproteolytically processed at the N-terminus. Expected C-terminal autoprocessing not detected. The sequence shown is that of the processed Pro protein.

It catalyses the reaction Processing at the authentic HIV-1 PR recognition site and release of the mature p17 matrix and the p24 capsid protein, as a result of the cleavage of the -SQNY-|-PIVQ- cleavage site.. Its function is as follows. Retroviral proteases have roles in the processing of the primary translation products and the maturation of the viral particle. Endogenous Pro proteins may have kept, lost or modified their original function during evolution. This chain is Endogenous retrovirus group K member 9 Pro protein (ERVK-9), found in Homo sapiens (Human).